A 202-amino-acid polypeptide reads, in one-letter code: Orotate phosphoribosyltransferase (202 aa).

5-phospho-alpha-D-ribose 1-diphosphate contacts are provided by residues Lys93 and 113 to 121; that span reads EDIITTGGS. Orotate contacts are provided by Thr117 and Arg145.

This sequence belongs to the purine/pyrimidine phosphoribosyltransferase family. PyrE subfamily. Homodimer. It depends on Mg(2+) as a cofactor.

It carries out the reaction orotidine 5'-phosphate + diphosphate = orotate + 5-phospho-alpha-D-ribose 1-diphosphate. Its pathway is pyrimidine metabolism; UMP biosynthesis via de novo pathway; UMP from orotate: step 1/2. Catalyzes the transfer of a ribosyl phosphate group from 5-phosphoribose 1-diphosphate to orotate, leading to the formation of orotidine monophosphate (OMP). The sequence is that of Orotate phosphoribosyltransferase from Campylobacter curvus (strain 525.92).